The chain runs to 210 residues: Redox-sensing transcriptional repressor Rex (210 aa).

The segment at residues 16-55 (IYMRTLQELLEDDVDVISSERLAKQCGVNPAQIRKDLAYF) is a DNA-binding region (H-T-H motif). 90–95 (GLGNLG) contributes to the NAD(+) binding site.

The protein belongs to the transcriptional regulatory Rex family. As to quaternary structure, homodimer.

It is found in the cytoplasm. In terms of biological role, modulates transcription in response to changes in cellular NADH/NAD(+) redox state. This is Redox-sensing transcriptional repressor Rex from Syntrophobacter fumaroxidans (strain DSM 10017 / MPOB).